Here is a 214-residue protein sequence, read N- to C-terminus: ER lumen protein-retaining receptor 3 (214 aa).

The Lumenal segment spans residues 1–4 (MNVF). A helical membrane pass occupies residues 5–24 (RISGDVSHLLAIIILLLKMW). Topologically, residues 25–32 (KSKSCAGI) are cytoplasmic. A helical membrane pass occupies residues 33–52 (SGKSQLLFALVFTTRYLDLF). The tract at residues 47–48 (RY) is interaction with the K-D-E-L motif on target proteins. The Lumenal portion of the chain corresponds to 53–58 (TVFISA). The helical transmembrane segment at 59-79 (YNTVMKIVFLVCAYVTVYLIY) threads the bilayer. Topologically, residues 80-92 (GKFRKAYDSENDT) are cytoplasmic. A helical transmembrane segment spans residues 93–110 (FRLEFLLVPVIGLSFLEN). Topologically, residues 111-116 (YEFTPL) are lumenal. The chain crosses the membrane as a helical span at residues 117-135 (EILWTFSIYLESVAILPQL). Residues 136–149 (FMISKTGEAESITT) lie on the Cytoplasmic side of the membrane. A helical transmembrane segment spans residues 150–168 (HYLFFLGLYRVLYLANWIW). Positions 159–169 (RVLYLANWIWR) are interaction with the K-D-E-L motif on target proteins. The Lumenal segment spans residues 169–178 (RYHTEKFYDQ). Residues 179–199 (IAVVSGVVQTIFYFDFFYLYI) traverse the membrane as a helical segment. At 200–214 (TKVLKGKKLSLPMPV) the chain is on the cytoplasmic side. An important for recycling of cargo proteins with the sequence motif K-D-E-L from the Golgi to the endoplasmic reticulum region spans residues 204–207 (KGKK).

It belongs to the ERD2 family.

It is found in the endoplasmic reticulum membrane. The protein localises to the golgi apparatus membrane. It localises to the cytoplasmic vesicle. Its subcellular location is the COPI-coated vesicle membrane. In terms of biological role, receptor for the C-terminal sequence motif K-D-E-L that is present on endoplasmic reticulum resident proteins and that mediates their recycling from the Golgi back to the endoplasmic reticulum. In Xenopus tropicalis (Western clawed frog), this protein is ER lumen protein-retaining receptor 3 (kdelr3).